We begin with the raw amino-acid sequence, 537 residues long: Copine-1 (537 aa).

2 consecutive C2 domains span residues 1-114 (MAHC…TLPL) and 123-245 (GRGT…ECIH). Positions 21, 27, 80, 82, 92, 153, and 159 each coordinate Ca(2+). K171 is subject to N6-acetyllysine. Positions 214, 216, and 222 each coordinate Ca(2+). A VWFA domain is found at 285–505 (NFTVGVDFTG…ALAQTVLAEV (221 aa)).

This sequence belongs to the copine family. In terms of assembly, homodimer; homodimerizes via its C2 domains. Interacts with p65/RELA (via N-terminus); this interaction induces proteolytic cleavage of p65/RELA subunit and inhibition of NF-kappa-B transcriptional activity. Interacts (via VWFA domain) with ACTB, CCDC22, MYCBP2, PPP5C, RDX and UBE2O. The cofactor is Ca(2+). In terms of tissue distribution, expressed in liver, spleen, muscle, testis, adrenal (at protein level).

The protein localises to the nucleus. It localises to the cytoplasm. It is found in the cell membrane. Calcium-dependent phospholipid-binding protein that plays a role in calcium-mediated intracellular processes. Involved in the TNF-alpha receptor signaling pathway in a calcium-dependent manner. Exhibits calcium-dependent phospholipid binding properties. Plays a role in neuronal progenitor cell differentiation; induces neurite outgrowth via a AKT-dependent signaling cascade and calcium-independent manner. May recruit target proteins to the cell membrane in a calcium-dependent manner. May function in membrane trafficking. Involved in TNF-alpha-induced NF-kappa-B transcriptional repression by inducing endoprotease processing of the transcription factor NF-kappa-B p65/RELA subunit. Also induces endoprotease processing of NF-kappa-B p50/NFKB1, p52/NFKB2, RELB and REL. The sequence is that of Copine-1 from Bos taurus (Bovine).